The following is a 99-amino-acid chain: MFAIIKTGGRQLKVEKDQTIFVEKIDKNEGETITFTDILFINGKIGTPYVENASVTGIIEKQGKAKKIVVYRHNPKSTHKRKLGHRQLFTKVKITELKG.

Belongs to the bacterial ribosomal protein bL21 family. Part of the 50S ribosomal subunit. Contacts protein L20.

This protein binds to 23S rRNA in the presence of protein L20. The protein is Large ribosomal subunit protein bL21 of Mesomycoplasma hyopneumoniae (strain 7448) (Mycoplasma hyopneumoniae).